The sequence spans 202 residues: Small ribosomal subunit protein uS5 (202 aa).

A compositionally biased stretch (gly residues) spans 1–13 (MPGQQRRGGGSGG). Residues 1-31 (MPGQQRRGGGSGGSDRRERRDRSGSGPAQEK) are disordered. Residues 14–23 (SDRRERRDRS) show a composition bias toward basic and acidic residues. In terms of domain architecture, S5 DRBM spans 34 to 97 (YVERVVAINR…EEAKKHFFKV (64 aa)).

Belongs to the universal ribosomal protein uS5 family. Part of the 30S ribosomal subunit. Contacts proteins S4 and S8.

With S4 and S12 plays an important role in translational accuracy. Functionally, located at the back of the 30S subunit body where it stabilizes the conformation of the head with respect to the body. This is Small ribosomal subunit protein uS5 from Frankia casuarinae (strain DSM 45818 / CECT 9043 / HFP020203 / CcI3).